Here is an 863-residue protein sequence, read N- to C-terminus: Linoleate 9S-lipoxygenase 1 (863 aa).

Positions 32–158 (RDFTASLLDN…KYHYNRIFFA (127 aa)) constitute a PLAT domain. Residues 161–863 (SYLPSQMPEA…ARGIPNSISI (703 aa)) enclose the Lipoxygenase domain. The disordered stretch occupies residues 204–244 (NDLGEPDRDNPRPVLGGSQKHPYPRRGRTGRIPTKKDPNSE). 5 residues coordinate Fe cation: His518, His523, His709, Asn713, and Ile863.

It belongs to the lipoxygenase family. In terms of assembly, monomer. Fe cation serves as cofactor.

The protein resides in the cytoplasm. It carries out the reaction (9Z,12Z)-octadecadienoate + O2 = (9S)-hydroperoxy-(10E,12Z)-octadecadienoate. It participates in lipid metabolism; oxylipin biosynthesis. Functionally, plant lipoxygenase may be involved in a number of diverse aspects of plant physiology including growth and development, pest resistance, and senescence or responses to wounding. This lipoxygenase introduces molecular oxygen exclusively into the C-9 position of linoleic and linolenic. In Oryza sativa subsp. japonica (Rice), this protein is Linoleate 9S-lipoxygenase 1.